The chain runs to 338 residues: Large ribosomal subunit protein uL10 (338 aa).

Residues 298–338 (TVQQSQSQQPAAEEKKEEKKEEEKKGPSEEEIASGLASLFG) are disordered. Positions 309-325 (AEEKKEEKKEEEKKGPS) are enriched in basic and acidic residues.

This sequence belongs to the universal ribosomal protein uL10 family. In terms of assembly, part of the 50S ribosomal subunit. Forms part of the ribosomal stalk which helps the ribosome interact with GTP-bound translation factors. Forms a heptameric L10(L12)2(L12)2(L12)2 complex, where L10 forms an elongated spine to which the L12 dimers bind in a sequential fashion.

In terms of biological role, forms part of the ribosomal stalk, playing a central role in the interaction of the ribosome with GTP-bound translation factors. The protein is Large ribosomal subunit protein uL10 of Saccharolobus solfataricus (strain ATCC 35092 / DSM 1617 / JCM 11322 / P2) (Sulfolobus solfataricus).